Reading from the N-terminus, the 469-residue chain is Aspartyl/glutamyl-tRNA(Asn/Gln) amidotransferase subunit B (469 aa).

The protein belongs to the GatB/GatE family. GatB subfamily. Heterotrimer of A, B and C subunits.

The catalysed reaction is L-glutamyl-tRNA(Gln) + L-glutamine + ATP + H2O = L-glutaminyl-tRNA(Gln) + L-glutamate + ADP + phosphate + H(+). It catalyses the reaction L-aspartyl-tRNA(Asn) + L-glutamine + ATP + H2O = L-asparaginyl-tRNA(Asn) + L-glutamate + ADP + phosphate + 2 H(+). Allows the formation of correctly charged Asn-tRNA(Asn) or Gln-tRNA(Gln) through the transamidation of misacylated Asp-tRNA(Asn) or Glu-tRNA(Gln) in organisms which lack either or both of asparaginyl-tRNA or glutaminyl-tRNA synthetases. The reaction takes place in the presence of glutamine and ATP through an activated phospho-Asp-tRNA(Asn) or phospho-Glu-tRNA(Gln). This Methanococcus maripaludis (strain C7 / ATCC BAA-1331) protein is Aspartyl/glutamyl-tRNA(Asn/Gln) amidotransferase subunit B.